The chain runs to 879 residues: Metabotropic glutamate receptor 3 (879 aa).

Positions 1–22 (MKMLTRLQILMLALFSKGFLLS) are cleaved as a signal peptide. The Extracellular segment spans residues 23 to 576 (LGDHNFMRRE…EDYIKWEDAW (554 aa)). C57 and C99 are disulfide-bonded. L-glutamate-binding positions include R68, S151, and 172 to 174 (AST). The N-linked (GlcNAc...) asparagine glycan is linked to N209. L-glutamate is bound at residue Y222. 7 disulfide bridges follow: C240–C527, C361–C373, C412–C419, C509–C528, C513–C531, C534–C546, and C549–C562. Residue N292 is glycosylated (N-linked (GlcNAc...) asparagine). Residue D301 participates in L-glutamate binding. Residue K389 participates in L-glutamate binding. N-linked (GlcNAc...) asparagine glycans are attached at residues N414 and N439. Residues 577–599 (AIGPVTIACLGFLCTCIVITVFI) traverse the membrane as a helical segment. The Cytoplasmic portion of the chain corresponds to 600-613 (KHNNTPLVKASGRE). The chain crosses the membrane as a helical span at residues 614 to 634 (LCYILLFGVSLSYCMTFFFIA). Topologically, residues 635–645 (KPSPVICALRR) are extracellular. The helical transmembrane segment at 646–664 (LGLGTSFAICYSALLTKTN) threads the bilayer. Residues 665–688 (CIARIFDGVKNGAQRPKFISPSSQ) lie on the Cytoplasmic side of the membrane. The helical transmembrane segment at 689–709 (VFICLGLILVQIVMVSVWLIL) threads the bilayer. Over 710-734 (ETPGTRRYTLPEKRETVILKCNVKD) the chain is Extracellular. Residues 735–756 (SSMLISLTYDVVLVILCTVYAF) traverse the membrane as a helical segment. At 757–769 (KTRKCPENFNEAK) the chain is on the cytoplasmic side. A helical transmembrane segment spans residues 770 to 792 (FIGFTMYTTCIIWLAFLPIFYVT). At 793-802 (SSDYRVQTTT) the chain is on the extracellular side. The helical transmembrane segment at 803–828 (MCISVSLSGFVVLGCLFAPKVHIVLF) threads the bilayer. The Cytoplasmic portion of the chain corresponds to 829-879 (QPQKNVVTHRLHLNRFSVSGTATTYSQSSASTYVPTVCNGREVLDSTTSSL).

This sequence belongs to the G-protein coupled receptor 3 family. In terms of assembly, interacts with TAMALIN. As to expression, is widely distributed in the CNS. Predominant expression is seen in the neuronal cells of the cerebral cortex, dentate gyrus, and glial cells throughout brain regions.

The protein localises to the cell membrane. Its function is as follows. G-protein coupled receptor for glutamate. Ligand binding causes a conformation change that triggers signaling via guanine nucleotide-binding proteins (G proteins) and modulates the activity of down-stream effectors. Signaling inhibits adenylate cyclase activity. The sequence is that of Metabotropic glutamate receptor 3 (Grm3) from Rattus norvegicus (Rat).